An 85-amino-acid chain; its full sequence is Small ribosomal subunit protein uS17 (85 aa).

The protein belongs to the universal ribosomal protein uS17 family. In terms of assembly, part of the 30S ribosomal subunit.

In terms of biological role, one of the primary rRNA binding proteins, it binds specifically to the 5'-end of 16S ribosomal RNA. This is Small ribosomal subunit protein uS17 from Geobacter sulfurreducens (strain ATCC 51573 / DSM 12127 / PCA).